Here is a 178-residue protein sequence, read N- to C-terminus: Ribosome maturation factor RimP (178 aa).

The protein belongs to the RimP family.

It is found in the cytoplasm. Functionally, required for maturation of 30S ribosomal subunits. This chain is Ribosome maturation factor RimP, found in Maricaulis maris (strain MCS10) (Caulobacter maris).